The following is a 219-amino-acid chain: Putative NAD(P)H nitroreductase SSP0379 (219 aa).

It belongs to the nitroreductase family. FMN is required as a cofactor.

This is Putative NAD(P)H nitroreductase SSP0379 from Staphylococcus saprophyticus subsp. saprophyticus (strain ATCC 15305 / DSM 20229 / NCIMB 8711 / NCTC 7292 / S-41).